The following is a 156-amino-acid chain: Small ribosomal subunit protein uS7 (156 aa).

Belongs to the universal ribosomal protein uS7 family. In terms of assembly, part of the 30S ribosomal subunit. Contacts proteins S9 and S11.

Its function is as follows. One of the primary rRNA binding proteins, it binds directly to 16S rRNA where it nucleates assembly of the head domain of the 30S subunit. Is located at the subunit interface close to the decoding center, probably blocks exit of the E-site tRNA. This chain is Small ribosomal subunit protein uS7, found in Shewanella sp. (strain ANA-3).